The chain runs to 181 residues: tRNA-splicing endonuclease (181 aa).

Residues Tyr118, His126, and Lys157 contribute to the active site.

The protein belongs to the tRNA-intron endonuclease family. Archaeal short subfamily. Homotetramer; although the tetramer contains four active sites, only two participate in the cleavage. Therefore, it should be considered as a dimer of dimers.

The catalysed reaction is pretRNA = a 3'-half-tRNA molecule with a 5'-OH end + a 5'-half-tRNA molecule with a 2',3'-cyclic phosphate end + an intron with a 2',3'-cyclic phosphate and a 5'-hydroxyl terminus.. In terms of biological role, endonuclease that removes tRNA introns. Cleaves pre-tRNA at the 5'- and 3'-splice sites to release the intron. The products are an intron and two tRNA half-molecules bearing 2',3' cyclic phosphate and 5'-OH termini. Recognizes a pseudosymmetric substrate in which 2 bulged loops of 3 bases are separated by a stem of 4 bp. The chain is tRNA-splicing endonuclease from Hyperthermus butylicus (strain DSM 5456 / JCM 9403 / PLM1-5).